The chain runs to 124 residues: Trophoblast-specific protein alpha (124 aa).

The signal sequence occupies residues 1 to 18 (MTPTIFLVILCLGVASAV). Disordered regions lie at residues 51 to 74 (KLHS…SGQL) and 91 to 124 (FEEE…NQPQ). The segment covering 62–74 (EGSNIEMSASGQL) has biased composition (polar residues). A compositionally biased stretch (acidic residues) spans 103–112 (DDPEFEDYTE).

The protein resides in the secreted. It localises to the extracellular space. Its function is as follows. It may be a growth factor/hormone, perhaps involved in interaction between the maternal and fetal systems in maintenance of pregnancy. The chain is Trophoblast-specific protein alpha (Tpbpa) from Mus musculus (Mouse).